The sequence spans 530 residues: Membrane protein insertase YidC (530 aa).

4 helical membrane-spanning segments follow: residues 5–25 (VVIA…MFPP), 348–368 (YGLA…PLTH), 418–438 (LPML…MFSI), and 492–512 (PVVF…YWLI).

This sequence belongs to the OXA1/ALB3/YidC family. Type 1 subfamily. Interacts with the Sec translocase complex via SecD. Specifically interacts with transmembrane segments of nascent integral membrane proteins during membrane integration.

Its subcellular location is the cell inner membrane. Functionally, required for the insertion and/or proper folding and/or complex formation of integral membrane proteins into the membrane. Involved in integration of membrane proteins that insert both dependently and independently of the Sec translocase complex, as well as at least some lipoproteins. Aids folding of multispanning membrane proteins. This Geotalea daltonii (strain DSM 22248 / JCM 15807 / FRC-32) (Geobacter daltonii) protein is Membrane protein insertase YidC.